The primary structure comprises 158 residues: SsrA-binding protein (158 aa).

A disordered region spans residues 134 to 158; the sequence is KLHDKRETEKERDWNRQKSRLLKTG. The segment covering 137–149 has biased composition (basic and acidic residues); the sequence is DKRETEKERDWNR.

It belongs to the SmpB family.

The protein localises to the cytoplasm. Required for rescue of stalled ribosomes mediated by trans-translation. Binds to transfer-messenger RNA (tmRNA), required for stable association of tmRNA with ribosomes. tmRNA and SmpB together mimic tRNA shape, replacing the anticodon stem-loop with SmpB. tmRNA is encoded by the ssrA gene; the 2 termini fold to resemble tRNA(Ala) and it encodes a 'tag peptide', a short internal open reading frame. During trans-translation Ala-aminoacylated tmRNA acts like a tRNA, entering the A-site of stalled ribosomes, displacing the stalled mRNA. The ribosome then switches to translate the ORF on the tmRNA; the nascent peptide is terminated with the 'tag peptide' encoded by the tmRNA and targeted for degradation. The ribosome is freed to recommence translation, which seems to be the essential function of trans-translation. In Allorhizobium ampelinum (strain ATCC BAA-846 / DSM 112012 / S4) (Agrobacterium vitis (strain S4)), this protein is SsrA-binding protein.